The following is a 272-amino-acid chain: uncharacterized protein (272 aa).

A signal peptide spans 1–20 (MKLRKIFLLPLISLSTLSVA). Residue cysteine 21 is the site of N-palmitoyl cysteine attachment. Residue cysteine 21 is the site of S-diacylglycerol cysteine attachment.

Belongs to the MG439/MG440 family.

Its subcellular location is the cell membrane. This is an uncharacterized protein from Mycoplasma genitalium (strain ATCC 33530 / DSM 19775 / NCTC 10195 / G37) (Mycoplasmoides genitalium).